The chain runs to 246 residues: Small ribosomal subunit protein uS2 (246 aa).

Residues 225 to 246 (SKSSASVPNKDEYVAAEDGAAE) form a disordered region.

Belongs to the universal ribosomal protein uS2 family.

The sequence is that of Small ribosomal subunit protein uS2 from Cellvibrio japonicus (strain Ueda107) (Pseudomonas fluorescens subsp. cellulosa).